A 133-amino-acid polypeptide reads, in one-letter code: Histone H2A (133 aa).

Positions 1-10 are enriched in gly residues; the sequence is MTGGKSGGKA. The disordered stretch occupies residues 1 to 24; that stretch reads MTGGKSGGKASGSKNAQSRSSKAG. An N6-acetyllysine mark is found at K5 and K9. An N5-methylglutamine modification is found at Q106. Position 130 is a phosphoserine (S130). A [ST]-Q motif motif is present at residues 130–131; it reads SQ.

This sequence belongs to the histone H2A family. In terms of assembly, the nucleosome is a histone octamer containing two molecules each of H2A, H2B, H3 and H4 assembled in one H3-H4 heterotetramer and two H2A-H2B heterodimers. The octamer wraps approximately 147 bp of DNA. Phosphorylated to form H2AS128ph (gamma-H2A) in response to DNA double-strand breaks (DSBs) generated by exogenous genotoxic agents and by stalled replication forks. Phosphorylation is dependent on the DNA damage checkpoint kinases mec1/ATR and tel1/ATM, spreads on either side of a detected DSB site and may mark the surrounding chromatin for recruitment of proteins required for DNA damage signaling and repair. Gamma-H2A is removed from the DNA prior to the strand invasion-primer extension step of the repair process and subsequently dephosphorylated. Dephosphorylation is necessary for efficient recovery from the DNA damage checkpoint. In terms of processing, acetylated by esa1 to form H2AK4ac and H2AK7ac.

It localises to the nucleus. The protein resides in the chromosome. Functionally, core component of nucleosome which plays a central role in DNA double strand break (DSB) repair. Nucleosomes wrap and compact DNA into chromatin, limiting DNA accessibility to the cellular machineries which require DNA as a template. Histones thereby play a central role in transcription regulation, DNA repair, DNA replication and chromosomal stability. DNA accessibility is regulated via a complex set of post-translational modifications of histones, also called histone code, and nucleosome remodeling. This is Histone H2A (hta1) from Aspergillus clavatus (strain ATCC 1007 / CBS 513.65 / DSM 816 / NCTC 3887 / NRRL 1 / QM 1276 / 107).